Here is a 341-residue protein sequence, read N- to C-terminus: LIM and senescent cell antigen-like-containing domain protein 2 (341 aa).

LIM zinc-binding domains lie at 13–74, 76–133, 138–195, 196–255, and 256–315; these read AMCQ…LFAP, CGFC…EKAK, FICQ…KMGI, PICG…LFGD, and VCYN…FPLE. The residue at position 328 (Ser328) is a Phosphoserine.

As to quaternary structure, interacts with integrin-linked protein kinase 1 (ILK) via the first LIM domain, and in competition with LIMS1. Part of the heterotrimeric IPP complex composed of integrin-linked kinase (ILK), LIMS1 or LIMS2, and PARVA. Interacts with TGFB1I1. In terms of tissue distribution, detected in heart, lung, kidney, liver, urinary bladder, fat, skin, skeletal muscle, uterus, large intestine and testis.

It is found in the cell junction. Its subcellular location is the focal adhesion. The protein localises to the cell membrane. Functionally, adapter protein in a cytoplasmic complex linking beta-integrins to the actin cytoskeleton, bridges the complex to cell surface receptor tyrosine kinases and growth factor receptors. This chain is LIM and senescent cell antigen-like-containing domain protein 2 (Lims2), found in Mus musculus (Mouse).